Reading from the N-terminus, the 764-residue chain is 5-methyltetrahydropteroyltriglutamate--homocysteine methyltransferase (764 aa).

Residues 16 to 19 (RELK) and Lys-115 contribute to the 5-methyltetrahydropteroyltri-L-glutamate site. L-homocysteine is bound by residues 435–437 (IGS) and Glu-488. L-methionine is bound by residues 435–437 (IGS) and Glu-488. 5-methyltetrahydropteroyltri-L-glutamate-binding positions include 519-520 (RC) and Trp-565. Asp-603 contributes to the L-homocysteine binding site. Asp-603 is a binding site for L-methionine. Position 609 (Glu-609) interacts with 5-methyltetrahydropteroyltri-L-glutamate. Residues His-645, Cys-647, and Glu-669 each contribute to the Zn(2+) site. His-698 acts as the Proton donor in catalysis. Cys-730 provides a ligand contact to Zn(2+).

This sequence belongs to the vitamin-B12 independent methionine synthase family. Zn(2+) serves as cofactor.

It catalyses the reaction 5-methyltetrahydropteroyltri-L-glutamate + L-homocysteine = tetrahydropteroyltri-L-glutamate + L-methionine. It functions in the pathway amino-acid biosynthesis; L-methionine biosynthesis via de novo pathway; L-methionine from L-homocysteine (MetE route): step 1/1. In terms of biological role, catalyzes the transfer of a methyl group from 5-methyltetrahydrofolate to homocysteine resulting in methionine formation. In Burkholderia pseudomallei (strain 1106a), this protein is 5-methyltetrahydropteroyltriglutamate--homocysteine methyltransferase.